We begin with the raw amino-acid sequence, 68 residues long: DNA-directed RNA polymerase subunit omega (68 aa).

It belongs to the RNA polymerase subunit omega family. The RNAP catalytic core consists of 2 alpha, 1 beta, 1 beta' and 1 omega subunit. When a sigma factor is associated with the core the holoenzyme is formed, which can initiate transcription.

It catalyses the reaction RNA(n) + a ribonucleoside 5'-triphosphate = RNA(n+1) + diphosphate. Promotes RNA polymerase assembly. Latches the N- and C-terminal regions of the beta' subunit thereby facilitating its interaction with the beta and alpha subunits. The chain is DNA-directed RNA polymerase subunit omega from Desulfatibacillum aliphaticivorans.